Here is a 617-residue protein sequence, read N- to C-terminus: Protein 4.1 (617 aa).

One can recognise an FERM domain in the interval 1–282 (MHCKVSLLDD…EHHTFFRLTS (282 aa)). Phosphotyrosine is present on Tyr-13. At Thr-169 the chain carries Phosphothreonine. Positions 308–401 (TRQASALIDR…AEPEPSEAWK (94 aa)) are disordered. A phosphoserine mark is found at Ser-312, Ser-331, and Ser-333. Residues 348–361 (RPTSAPAIAPSPAA) are compositionally biased toward low complexity. Residues 387-396 (APPEDAEPEP) are compositionally biased toward acidic residues. The interval 401–466 (KKKRERLDGE…WDKRLSTHSP (66 aa)) is spectrin--actin-binding. Tyr-413 is modified (phosphotyrosine; by EGFR). Phosphoserine is present on residues Ser-417, Ser-427, Ser-437, and Ser-462. Ser-465 bears the Phosphoserine; by CDK1 mark. A C-terminal (CTD) region spans residues 467 to 617 (FRTLNINGQI…VHQETEISEE (151 aa)). Thr-489 and Thr-612 each carry phosphothreonine.

In terms of assembly, binds with a high affinity to glycophorin and with lower affinity to band III protein. Associates with the nuclear mitotic apparatus. Binds calmodulin, CPAP and DLG1. Also found to associate with contractile apparatus and tight junctions. Interacts with NUMA1; this interaction is negatively regulated by CDK1 during metaphase and promotes anaphase-specific localization of NUMA1 in symmetrically dividing cells. Interacts with ATP2B1; regulates small intestinal calcium absorption through regulation of membrane expression of ATP2B1. In terms of processing, phosphorylated at multiple sites by different protein kinases and each phosphorylation event selectively modulates the protein's functions. Phosphorylation on Tyr-413 reduces the ability of 4.1 to promote the assembly of the spectrin/actin/4.1 ternary complex.

It localises to the nucleus. Its subcellular location is the cytoplasm. The protein resides in the cytoskeleton. It is found in the cell cortex. Functionally, protein 4.1 is a major structural element of the erythrocyte membrane skeleton. It plays a key role in regulating membrane physical properties of mechanical stability and deformability by stabilizing spectrin-actin interaction. Recruits DLG1 to membranes. Required for dynein-dynactin complex and NUMA1 recruitment at the mitotic cell cortex during anaphase. The chain is Protein 4.1 from Bos taurus (Bovine).